Consider the following 291-residue polypeptide: rRNA 2'-O-methyltransferase fibrillarin (291 aa).

2 stretches are compositionally biased toward basic and acidic residues: residues 1-12 and 20-29; these read MKKTNKRPDGRK and FRSDKGEGRG. Positions 1-45 are disordered; it reads MKKTNKRPDGRKFQKGGKPFRSDKGEGRGRMNNKKKGSVNAGLDR. Asymmetric dimethylarginine occurs at positions 28 and 62. S-adenosyl-L-methionine is bound by residues 134–135, 153–154, 178–179, and 198–201; these read TT, EF, DA, and DVSQ.

This sequence belongs to the methyltransferase superfamily. Fibrillarin family. In terms of assembly, component of box C/D small nucleolar ribonucleoprotein (snoRNP) particles.

Its subcellular location is the nucleus. The protein resides in the nucleolus. It catalyses the reaction L-glutaminyl-[histone H2A] + S-adenosyl-L-methionine = N(5)-methyl-L-glutaminyl-[histone H2A] + S-adenosyl-L-homocysteine + H(+). S-adenosyl-L-methionine-dependent methyltransferase that has the ability to methylate both RNAs and proteins. Involved in pre-rRNA processing. Utilizes the methyl donor S-adenosyl-L-methionine to catalyze the site-specific 2'-hydroxyl methylation of ribose moieties in pre-ribosomal RNA. Site specificity is provided by a guide RNA that base pairs with the substrate. Methylation occurs at a characteristic distance from the sequence involved in base pairing with the guide RNA. Also acts as a protein methyltransferase by mediating methylation of 'Gln-105' of histone H2A (H2AQ105me), a modification that impairs binding of the FACT complex and is specifically present at 35S ribosomal DNA locus. This is rRNA 2'-O-methyltransferase fibrillarin (NOP1) from Encephalitozoon cuniculi (strain GB-M1) (Microsporidian parasite).